Reading from the N-terminus, the 605-residue chain is DNA primase (605 aa).

The segment at 38 to 62 adopts a CHC2-type zinc-finger fold; that stretch reads CPFHDEKTPSFTVSEDKQICHCFGC. In terms of domain architecture, Toprim spans 260 to 341; the sequence is DEIVLLEGFM…NVFVIQLPSG (82 aa). E266, D310, and D312 together coordinate Mg(2+).

The protein belongs to the DnaG primase family. As to quaternary structure, monomer. Interacts with DnaB. Zn(2+) is required as a cofactor. The cofactor is Mg(2+).

The enzyme catalyses ssDNA + n NTP = ssDNA/pppN(pN)n-1 hybrid + (n-1) diphosphate.. RNA polymerase that catalyzes the synthesis of short RNA molecules used as primers for DNA polymerase during DNA replication. The sequence is that of DNA primase from Staphylococcus aureus (strain Mu50 / ATCC 700699).